A 77-amino-acid polypeptide reads, in one-letter code: Large ribosomal subunit protein bL28 (77 aa).

Positions 1–25 are disordered; the sequence is MARVCQVTGKAPMSGNNVSHANNKT.

This sequence belongs to the bacterial ribosomal protein bL28 family.

The sequence is that of Large ribosomal subunit protein bL28 from Paraburkholderia phymatum (strain DSM 17167 / CIP 108236 / LMG 21445 / STM815) (Burkholderia phymatum).